The chain runs to 428 residues: Probable mannosyltransferase YUR1 (428 aa).

The Cytoplasmic segment spans residues 1 to 3 (MAK). A helical; Signal-anchor for type II membrane protein membrane pass occupies residues 4–24 (GGSLYIVGIFLPIWTFMIYIF). The interval 25 to 88 (GKELFLIRKY…TRQNDSDSFH (64 aa)) is stem region. The Lumenal segment spans residues 25 to 428 (GKELFLIRKY…YFLKEEQDEI (404 aa)). N77, N82, N92, and N167 each carry an N-linked (GlcNAc...) asparagine glycan. A catalytic region spans residues 89–428 (LRENATILML…YFLKEEQDEI (340 aa)). The active-site Nucleophile is the E313. Residue N414 is glycosylated (N-linked (GlcNAc...) asparagine).

This sequence belongs to the glycosyltransferase 15 family.

The protein resides in the golgi apparatus membrane. It participates in protein modification; protein glycosylation. Possible glycosyltransferase involved in N-linked glycosylation. Transfers an alpha-D-mannosyl residue from GDP-mannose into lipid-linked oligosaccharide, forming an alpha-(1-&gt;2)-D-mannosyl-D-mannose linkage. This chain is Probable mannosyltransferase YUR1 (YUR1), found in Saccharomyces cerevisiae (strain ATCC 204508 / S288c) (Baker's yeast).